The following is a 457-amino-acid chain: Adenylosuccinate synthetase isozyme 2 (457 aa).

GTP-binding positions include 40–46 (GDEGKGK) and 68–70 (GHT). Residue Asp-41 is the Proton acceptor of the active site. The Mg(2+) site is built by Asp-41 and Gly-68. Asp-41 is a substrate binding site. IMP is bound by residues 41–44 (DEGK), 66–69 (NAGH), Thr-163, Arg-177, Asn-256, Thr-271, and Arg-335. His-69 (proton donor) is an active-site residue. Residue 331 to 337 (VTTGRKR) participates in substrate binding. Residues Arg-337, 363–365 (KLD), and 445–448 (GVGK) each bind GTP.

Belongs to the adenylosuccinate synthetase family. In terms of assembly, homodimer. Mg(2+) is required as a cofactor.

It is found in the cytoplasm. The protein resides in the mitochondrion. The catalysed reaction is IMP + L-aspartate + GTP = N(6)-(1,2-dicarboxyethyl)-AMP + GDP + phosphate + 2 H(+). The protein operates within purine metabolism; AMP biosynthesis via de novo pathway; AMP from IMP: step 1/2. Its activity is regulated as follows. Inhibited competitively by AMP and IMP and non-competitively by fructose 1,6-bisphosphate. Functionally, plays an important role in the de novo pathway and in the salvage pathway of purine nucleotide biosynthesis. Catalyzes the first committed step in the biosynthesis of AMP from IMP. This is Adenylosuccinate synthetase isozyme 2 (adss2) from Xenopus laevis (African clawed frog).